The sequence spans 91 residues: Small ribosomal subunit protein uS7 (91 aa).

This sequence belongs to the universal ribosomal protein uS7 family. In terms of assembly, part of the 30S ribosomal subunit. Contacts proteins S9 and S11.

One of the primary rRNA binding proteins, it binds directly to 16S rRNA where it nucleates assembly of the head domain of the 30S subunit. Is located at the subunit interface close to the decoding center, probably blocks exit of the E-site tRNA. The chain is Small ribosomal subunit protein uS7 (rpsG) from Apple proliferation phytoplasma.